A 384-amino-acid chain; its full sequence is MAP kinase-activated protein kinase 3 (384 aa).

The residue at position 1 (Met1) is an N-acetylmethionine. A disordered region spans residues 1–22; sequence MDVETAEEQGGPAPPSGVPCGP. In terms of domain architecture, Protein kinase spans 46–306; sequence QLSKQVLGLG…ITQFMNHPWI (261 aa). ATP-binding positions include 52 to 60 and Lys75; that span reads LGLGVNGKV. The active-site Proton acceptor is Asp168. Thr203 bears the Phosphothreonine; by MAPK14 mark. A Phosphoserine; by MAPK14 modification is found at Ser253. Residue Ser309 is modified to Phosphoserine; by autocatalysis. The tract at residues 309 to 345 is autoinhibitory helix; the sequence is SMVVPQTPLHTARVLQEDRDHWDEVKEEMTSALATMR. Thr315 bears the Phosphothreonine; by MAPK14 mark. Positions 337–346 match the Nuclear export signal (NES) motif; it reads MTSALATMRV. The interval 347 to 371 is p38 MAPK-binding site; sequence DYDQVKIKDLKTSNNRLLNKRRKKQ. 2 short sequence motifs (bipartite nuclear localization signal) span residues 352–355 and 366–370; these read KIKD and KRRKK. The tract at residues 359–384 is disordered; the sequence is SNNRLLNKRRKKQAGSSSGSQGCNNQ. Over residues 373-384 the composition is skewed to low complexity; it reads GSSSGSQGCNNQ.

Belongs to the protein kinase superfamily. CAMK Ser/Thr protein kinase family. As to quaternary structure, heterodimer with p38-alpha/MAPK14. The heterodimer with p38-alpha/MAPK14 forms a stable complex: molecules are positioned 'face to face' so that the ATP-binding sites of both kinases are at the heterodimer interface. Interacts with TCF3 and with polycomb proteins, such as PCH2 and BMI1/PCGF4. In terms of processing, phosphorylated and activated by MAPK1/ERK2 and MAPK3/ERK1. Phosphorylated and activated by MAP kinase p38-alpha/MAPK14 at Thr-203, Ser-253 and Thr-315.

It localises to the nucleus. The protein localises to the cytoplasm. The catalysed reaction is L-seryl-[protein] + ATP = O-phospho-L-seryl-[protein] + ADP + H(+). The enzyme catalyses L-threonyl-[protein] + ATP = O-phospho-L-threonyl-[protein] + ADP + H(+). Activated following phosphorylation by p38-alpha/MAPK14 following various stresses. Inhibited by ligand 5B (2'-[2-(1,3-benzodioxol-5-yl)pyrimidin-4-yl]-5',6'-dihydrospiro[piperidine-4,7'-pyrrolo[3,2-c]pyridin]- 4'(1'h)-one) and ligand P4O (2-[2-(2-fluorophenyl)pyridin-4-yl]-1,5,6,7-tetrahydro- 4h-pyrrolo[3,2-c]pyridin-4-one), 2 ATP-competitive inhibitors. In terms of biological role, stress-activated serine/threonine-protein kinase involved in cytokines production, endocytosis, cell migration, chromatin remodeling and transcriptional regulation. Following stress, it is phosphorylated and activated by MAP kinase p38-alpha/MAPK14, leading to phosphorylation of substrates. Phosphorylates serine in the peptide sequence, Hyd-X-R-X(2)-S, where Hyd is a large hydrophobic residue. MAPKAPK2 and MAPKAPK3, share the same function and substrate specificity, but MAPKAPK3 kinase activity and level in protein expression are lower compared to MAPKAPK2. Phosphorylates HSP27/HSPB1, KRT18, KRT20, RCSD1, RPS6KA3, TAB3 and TTP/ZFP36. Mediates phosphorylation of HSP27/HSPB1 in response to stress, leading to dissociate HSP27/HSPB1 from large small heat-shock protein (sHsps) oligomers and impair their chaperone activities and ability to protect against oxidative stress effectively. Involved in inflammatory response by regulating tumor necrosis factor (TNF) and IL6 production post-transcriptionally: acts by phosphorylating AU-rich elements (AREs)-binding proteins, such as TTP/ZFP36, leading to regulate the stability and translation of TNF and IL6 mRNAs. Phosphorylation of TTP/ZFP36, a major post-transcriptional regulator of TNF, promotes its binding to 14-3-3 proteins and reduces its ARE mRNA affinity leading to inhibition of dependent degradation of ARE-containing transcript. Involved in toll-like receptor signaling pathway (TLR) in dendritic cells: required for acute TLR-induced macropinocytosis by phosphorylating and activating RPS6KA3. Also acts as a modulator of Polycomb-mediated repression. The protein is MAP kinase-activated protein kinase 3 (MAPKAPK3) of Bos taurus (Bovine).